The following is a 394-amino-acid chain: Ribulose bisphosphate carboxylase large chain (394 aa).

N6,N6,N6-trimethyllysine is present on K5. Positions 114 and 164 each coordinate substrate. K166 (proton acceptor) is an active-site residue. Residue K168 coordinates substrate. Mg(2+)-binding residues include K192, D194, and E195. N6-carboxylysine is present on K192. H285 acts as the Proton acceptor in catalysis. Residues R286, H318, and S370 each contribute to the substrate site.

Belongs to the RuBisCO large chain family. Type I subfamily. As to quaternary structure, heterohexadecamer of 8 large chains and 8 small chains. The cofactor is Mg(2+).

The protein localises to the plastid. It is found in the chloroplast. The enzyme catalyses 2 (2R)-3-phosphoglycerate + 2 H(+) = D-ribulose 1,5-bisphosphate + CO2 + H2O. It carries out the reaction D-ribulose 1,5-bisphosphate + O2 = 2-phosphoglycolate + (2R)-3-phosphoglycerate + 2 H(+). RuBisCO catalyzes two reactions: the carboxylation of D-ribulose 1,5-bisphosphate, the primary event in carbon dioxide fixation, as well as the oxidative fragmentation of the pentose substrate in the photorespiration process. Both reactions occur simultaneously and in competition at the same active site. The protein is Ribulose bisphosphate carboxylase large chain (rbcL) of Euryale ferox (Gorgon plant).